The chain runs to 338 residues: Phenylalanine--tRNA ligase alpha subunit (338 aa).

E252 contacts Mg(2+).

Belongs to the class-II aminoacyl-tRNA synthetase family. Phe-tRNA synthetase alpha subunit type 1 subfamily. Tetramer of two alpha and two beta subunits. Mg(2+) serves as cofactor.

The protein resides in the cytoplasm. The catalysed reaction is tRNA(Phe) + L-phenylalanine + ATP = L-phenylalanyl-tRNA(Phe) + AMP + diphosphate + H(+). The sequence is that of Phenylalanine--tRNA ligase alpha subunit from Pseudomonas syringae pv. syringae (strain B728a).